We begin with the raw amino-acid sequence, 408 residues long: 3-ketoacyl-CoA thiolase A, peroxisomal (408 aa).

Residue Cys112 is the Acyl-thioester intermediate of the active site. Catalysis depends on proton acceptor residues His366 and Cys394.

Belongs to the thiolase-like superfamily. Thiolase family. As to quaternary structure, homodimer.

The protein localises to the peroxisome. It carries out the reaction an acyl-CoA + acetyl-CoA = a 3-oxoacyl-CoA + CoA. The protein operates within lipid metabolism; fatty acid metabolism. This Candida tropicalis (Yeast) protein is 3-ketoacyl-CoA thiolase A, peroxisomal.